Consider the following 117-residue polypeptide: UPF0295 protein GTNG_0491 (117 aa).

A run of 2 helical transmembrane segments spans residues 12–32 (IRTFALSLIFVGVIVMYLGLF) and 42–62 (LFMVLGLLFLVASGIVYFWIG).

This sequence belongs to the UPF0295 family.

Its subcellular location is the cell membrane. This Geobacillus thermodenitrificans (strain NG80-2) protein is UPF0295 protein GTNG_0491.